The chain runs to 253 residues: MEHAAFVHNEEQYIVHNPKEVTQIINDLIKHKSMIKVTFNHGADVYLTSIISIDAKTGAVYLDVGVDDEFNRRLLASNHVVFIKEDGVKIKWTSAHIAGVELKDGKAIKIALPKDMVRLQRRDFYRFATPVANPVVCKIPVPDVLNPAEETILELSLVDVSLGGIGTLVAAPLNPALVLGQAFNGCKIGFPDVGETNLTLKVKNITEIHVQDVMTKYRVGFEYVEPSRGNEGLINRYVYILERQAIALAHGAA.

The 120-residue stretch at 120-239 folds into the PilZ domain; that stretch reads QRRDFYRFAT…NEGLINRYVY (120 aa).

The protein belongs to the YcgR family. Monomer. Interacts with the flagellar basal bodies.

Its subcellular location is the bacterial flagellum basal body. Its function is as follows. Acts as a flagellar brake, regulating swimming and swarming in a bis-(3'-5') cyclic diguanylic acid (c-di-GMP)-dependent manner. Binds 1 c-di-GMP dimer per subunit. Increasing levels of c-di-GMP lead to decreased motility. The sequence is that of Flagellar brake protein YcgR from Methylotenera mobilis (strain JLW8 / ATCC BAA-1282 / DSM 17540).